Reading from the N-terminus, the 107-residue chain is Auxin-responsive protein SAUR50 (107 aa).

The protein belongs to the ARG7 family. As to quaternary structure, interacts with BZR1. Expressed in cotyledons, leaves, flowers and siliques.

The protein resides in the cell membrane. Its function is as follows. Provide a mechanistic link between auxin and plasma membrane H(+)-ATPases (PM H(+)-ATPases, e.g. AHA1 and AHA2), and triggers PM H(+)-ATPases activity by promoting phosphorylation of their C-terminal autoinhibitory domain as a result of PP2C-D subfamily of type 2C phosphatases inhibition, thus leading to the acidification of the apoplast and the facilitation of solutes and water uptake to drive cell expansion. Triggers plant growth probably by promoting cell elongation. Regulates branch angles and bending. Effector of hormonal and environmental signals in plant growth. The protein is Auxin-responsive protein SAUR50 of Arabidopsis thaliana (Mouse-ear cress).